The chain runs to 211 residues: 2,3-bisphosphoglycerate-dependent phosphoglycerate mutase (211 aa).

Residues 9 to 16 (RHGQSDWN), 22 to 23 (TG), arginine 61, 88 to 91 (ERDY), lysine 99, 115 to 116 (RR), and 159 to 160 (GN) contribute to the substrate site. Histidine 10 (tele-phosphohistidine intermediate) is an active-site residue. The Proton donor/acceptor role is filled by glutamate 88.

It belongs to the phosphoglycerate mutase family. BPG-dependent PGAM subfamily. In terms of assembly, homodimer.

It carries out the reaction (2R)-2-phosphoglycerate = (2R)-3-phosphoglycerate. The protein operates within carbohydrate degradation; glycolysis; pyruvate from D-glyceraldehyde 3-phosphate: step 3/5. Functionally, catalyzes the interconversion of 2-phosphoglycerate and 3-phosphoglycerate. This is 2,3-bisphosphoglycerate-dependent phosphoglycerate mutase from Rhizobium etli (strain CIAT 652).